A 304-amino-acid chain; its full sequence is uncharacterized protein (304 aa).

Residues 1-183 are disordered; it reads MTAPNEPGAL…ARVQLSARRS (183 aa). Over residues 132–166 the composition is skewed to low complexity; it reads PTPRAPQRNPAPARPAEGGAGSRGDSAAGSSGGRS. The next 2 helical transmembrane spans lie at 206-226 and 265-285; these read LLLSVALFFVWMITVAFLYLV and FLIGLVNIVLMTALATIGAFV.

To M.leprae ML0007.

It localises to the cell membrane. This is an uncharacterized protein from Mycobacterium tuberculosis (strain ATCC 25618 / H37Rv).